We begin with the raw amino-acid sequence, 392 residues long: Probable tRNA sulfurtransferase (392 aa).

Residues glutamine 60–lysine 162 form the THUMP domain. Residues leucine 180–leucine 181, threonine 205–phenylalanine 206, arginine 264, glycine 286, and glutamine 295 contribute to the ATP site.

The protein belongs to the ThiI family.

It is found in the cytoplasm. The enzyme catalyses [ThiI sulfur-carrier protein]-S-sulfanyl-L-cysteine + a uridine in tRNA + 2 reduced [2Fe-2S]-[ferredoxin] + ATP + H(+) = [ThiI sulfur-carrier protein]-L-cysteine + a 4-thiouridine in tRNA + 2 oxidized [2Fe-2S]-[ferredoxin] + AMP + diphosphate. It catalyses the reaction [ThiS sulfur-carrier protein]-C-terminal Gly-Gly-AMP + S-sulfanyl-L-cysteinyl-[cysteine desulfurase] + AH2 = [ThiS sulfur-carrier protein]-C-terminal-Gly-aminoethanethioate + L-cysteinyl-[cysteine desulfurase] + A + AMP + 2 H(+). The protein operates within cofactor biosynthesis; thiamine diphosphate biosynthesis. Its function is as follows. Catalyzes the ATP-dependent transfer of a sulfur to tRNA to produce 4-thiouridine in position 8 of tRNAs, which functions as a near-UV photosensor. Also catalyzes the transfer of sulfur to the sulfur carrier protein ThiS, forming ThiS-thiocarboxylate. This is a step in the synthesis of thiazole, in the thiamine biosynthesis pathway. The sulfur is donated as persulfide by IscS. In Ureaplasma urealyticum serovar 10 (strain ATCC 33699 / Western), this protein is Probable tRNA sulfurtransferase.